Here is a 307-residue protein sequence, read N- to C-terminus: MWENFIEEKVKEIRETVGDGKAIIALSGGVDSSTAAVLAHRAIGDRLHAVFVNTGFMRKGEPEFVVKTFRDEFGLNLHYVDASERFFRELKGVTDPEEKRKIIGRVFIEVFEEVAKEINADFLIQGTIAPDWIESHGKIKSHHNVGGLPERLNLKLIEPLRDLYKDEVRELAKELGLPEKIYNRMPFPGPGLAVRVLGEVTPERVAIVREANAIVEEEIEKAGLKPWQAFAVLLGVKTVGVQGDIRAYKETVAVRVVESLDGMTANAMNVPWEVLQRIAFRITSEIPEVGRVLYDITNKPPATIEFE.

Residues 1-184 (MWENFIEEKV…LGLPEKIYNR (184 aa)) enclose the GMPS ATP-PPase domain. Residue 27–33 (SGGVDSS) coordinates ATP.

In terms of assembly, heterodimer composed of a glutamine amidotransferase subunit (A) and a GMP-binding subunit (B).

The enzyme catalyses XMP + L-glutamine + ATP + H2O = GMP + L-glutamate + AMP + diphosphate + 2 H(+). It functions in the pathway purine metabolism; GMP biosynthesis; GMP from XMP (L-Gln route): step 1/1. Functionally, catalyzes the synthesis of GMP from XMP. The polypeptide is GMP synthase [glutamine-hydrolyzing] subunit B (Thermococcus kodakarensis (strain ATCC BAA-918 / JCM 12380 / KOD1) (Pyrococcus kodakaraensis (strain KOD1))).